The sequence spans 583 residues: MKELVKEKVLKALKELYNTQVENFKVEKPKEEAHGDLASNVAFLLARELKKPPVNIAQELADFLSKDETFKSVEAVKGFINFRFSEDFLKEEFKKFLLSGEAYFKEDLGKGLKVQLEYVSANPTGPLHLGHGRGAVVGDTLARLFKFFNYDVTREYYINDAGRQVYLLGISIYYRYLEKCPERDEETFKEIKEIFEKDGYRGEYVKEIAERLRKLVGESLCKPEEANLKEVREKILKEESIELYYTKKYEPKDVVDLLSNYGLDLMMKEIREDLSLMDISFDVWFSERSLYDSGEVERLINLLKEKGYVYEKDGALWLKTSLFGDDKDRVVKRSDGTYTYFASDIAYHYNKFKRGFEKVINVWGADHHGYIPRVKAALKMLEIPEDWLEILLVQMVKLFREGKEVKMSKRAGTFVTLRELLDEVGKDAVRFIFLTKRSDTPLDFDVEKAKEKSSENPVYYVQYAHARISGIFREFKERYKKDVSVEELINYVQHLEEEAEIKLIKKVLFFKDELVDITLKREPHLLTYYLIDLAGDFHHYYNHHRILGMEENVMFSRLALVKGIKEVVRLGLNLMGVSAPERM.

The short motif at 121 to 131 (ANPTGPLHLGH) is the 'HIGH' region element.

Belongs to the class-I aminoacyl-tRNA synthetase family. As to quaternary structure, monomer.

Its subcellular location is the cytoplasm. It catalyses the reaction tRNA(Arg) + L-arginine + ATP = L-arginyl-tRNA(Arg) + AMP + diphosphate. The chain is Arginine--tRNA ligase (argS) from Aquifex aeolicus (strain VF5).